Consider the following 317-residue polypeptide: Bile salt hydrolase/transferase (317 aa).

Cysteine 2 functions as the Nucleophile; acyl-thioester intermediate in the catalytic mechanism. Cysteine 2 and arginine 18 together coordinate deoxycholate. Asparagine 82 contributes to the taurine binding site.

The protein belongs to the peptidase C59 family. As to quaternary structure, homotetramer. The tetramer consists of a dimer of dimers.

It catalyses the reaction glycocholate + H2O = cholate + glycine. The enzyme catalyses glycodeoxycholate + H2O = deoxycholate + glycine. The catalysed reaction is chenodeoxycholate + glycine = glycochenodeoxycholate + H2O. It carries out the reaction cholate + taurine = taurocholate + H2O. It catalyses the reaction taurodeoxycholate + H2O = deoxycholate + taurine. The enzyme catalyses taurochenodeoxycholate + H2O = chenodeoxycholate + taurine. The catalysed reaction is an L-alpha-amino acid + cholate = an N-choloyl-L-alpha-amino acid + H2O. It carries out the reaction an L-alpha-amino acid + taurocholate = an N-choloyl-L-alpha-amino acid + taurine. It catalyses the reaction cholate + L-alanine = L-alanocholate + H2O. The enzyme catalyses taurocholate + L-alanine = L-alanocholate + taurine. The catalysed reaction is cholate + L-serine = L-serocholate + H2O. It carries out the reaction taurocholate + L-serine = L-serocholate + taurine. It catalyses the reaction cholate + L-histidine = L-histidocholate + H2O. The enzyme catalyses taurocholate + L-histidine = L-histidocholate + taurine. Its pathway is lipid metabolism; bile acid biosynthesis. Functionally, possesses dual functions in bile acid metabolism. Acts as a bile salt hydrolase that catalyzes the deconjugation of glycine- and taurine-linked bile salts, which occurs naturally in the intestines of humans, releasing amino acid residues and deconjugated bile salts (bile acids). Can hydrolyze the amide bond in all six major human conjugated bile salts, namely glycocholate (GCA), glycodeoxycholate (GDCA), glycochenodeoxycholate (GCDCA), taurocholate (TCA), taurodeoxycholate (TDCA) and taurochenodeoxycholate (TCDCA). Shows a slight preference for glycine-conjugated bile acids as substrates. Also acts as an amine N-acyltransferase that conjugates a wide variety of amino acids to conjugated and non-conjugated bile acids, thus producing bacterial bile acid amidates (BBAAs) - also named microbially conjugated bile acids (MCBAs) - in the gastrointestinal tract. These BBAAs may facilitate communication between the microbiota and host through the activation of human ligand-activated transcription factors. The chain is Bile salt hydrolase/transferase from Bifidobacterium longum subsp. longum (strain ATCC 15707 / DSM 20219 / JCM 1217 / NCTC 11818 / E194b).